Here is a 764-residue protein sequence, read N- to C-terminus: Phenylalanine--tRNA ligase beta subunit (764 aa).

Positions 38-148 (CIAPKNVVVG…GELVLGKELN (111 aa)) constitute a tRNA-binding domain. The B5 domain maps to 375-455 (LKDRTLTFQL…RFVGIDNLVS (81 aa)). Residues aspartate 433, aspartate 439, glutamate 442, and glutamate 443 each contribute to the Mg(2+) site. One can recognise an FDX-ACB domain in the interval 673–763 (SIYPSSVRDL…LEKEFNARLK (91 aa)).

This sequence belongs to the phenylalanyl-tRNA synthetase beta subunit family. Type 1 subfamily. Tetramer of two alpha and two beta subunits. The cofactor is Mg(2+).

The protein localises to the cytoplasm. The catalysed reaction is tRNA(Phe) + L-phenylalanine + ATP = L-phenylalanyl-tRNA(Phe) + AMP + diphosphate + H(+). The sequence is that of Phenylalanine--tRNA ligase beta subunit (pheT) from Helicobacter pylori (strain ATCC 700392 / 26695) (Campylobacter pylori).